The following is a 530-amino-acid chain: Glutamate--cysteine ligase (530 aa).

It belongs to the glutamate--cysteine ligase type 1 family. Type 1 subfamily.

The enzyme catalyses L-cysteine + L-glutamate + ATP = gamma-L-glutamyl-L-cysteine + ADP + phosphate + H(+). It functions in the pathway sulfur metabolism; glutathione biosynthesis; glutathione from L-cysteine and L-glutamate: step 1/2. This is Glutamate--cysteine ligase from Azotobacter vinelandii (strain DJ / ATCC BAA-1303).